A 141-amino-acid polypeptide reads, in one-letter code: Large ribosomal subunit protein uL16 (141 aa).

The protein belongs to the universal ribosomal protein uL16 family. As to quaternary structure, part of the 50S ribosomal subunit.

Binds 23S rRNA and is also seen to make contacts with the A and possibly P site tRNAs. This chain is Large ribosomal subunit protein uL16, found in Thermus thermophilus (strain ATCC BAA-163 / DSM 7039 / HB27).